We begin with the raw amino-acid sequence, 920 residues long: Protein FAN (920 aa).

Residues 176-247 (RLARTSFDKN…QDVRRIYKRR (72 aa)) enclose the GRAM domain. One can recognise a BEACH-type PH domain in the interval 189–286 (SVSEKLHMEC…DRDDLYFYIA (98 aa)). Residues 290–575 (EHHAAEHTAE…QLFVTPHPRR (286 aa)) enclose the BEACH domain. 6 WD repeats span residues 631–661 (IHKE…KMFS), 673–703 (FSNM…YFYS), 715–743 (GHDD…KVWS), 764–794 (EHDV…NIWD), 806–836 (CHSG…NVID), and 887–917 (GHTG…MFWK).

Its function is as follows. Couples the p55 TNF-receptor (TNF-R55 / TNFR1) to neutral sphingomyelinase (N-SMASE). Specifically binds to the N-smase activation domain of TNF-R55. May regulate ceramide production by N-SMASE. The chain is Protein FAN (Nsmaf) from Mus musculus (Mouse).